Here is a 216-residue protein sequence, read N- to C-terminus: MDASPKYTGVRKRKWGKWVAEIRLPNSRDRIWLGSFDSAEKAARAFDAALYCLRGPGARFNFPDNPPEIPGGRSLTPQQIQVVASRFACEEELLPPEQHHPSPPRGDHNTEEEVIISARGEINSGSGGPTLGQVGEDNNNEGNSNDTSSYWPLIWEEENFVGPPNSDHEFGFFTDDSTNLYFPTQQQQQHQLSSDFYYDGACEDDFSHYNINLWNF.

The AP2/ERF DNA-binding region spans 6 to 63 (KYTGVRKRKWGKWVAEIRLPNSRDRIWLGSFDSAEKAARAFDAALYCLRGPGARFNFP). The segment at 121–145 (EINSGSGGPTLGQVGEDNNNEGNSN) is disordered. The segment covering 135–145 (GEDNNNEGNSN) has biased composition (low complexity).

It belongs to the AP2/ERF transcription factor family. ERF subfamily.

The protein localises to the nucleus. Its function is as follows. Probably acts as a transcriptional activator. Binds to the GCC-box pathogenesis-related promoter element. May be involved in the regulation of gene expression by stress factors and by components of stress signal transduction pathways. The chain is Ethylene-responsive transcription factor ERF016 (ERF016) from Arabidopsis thaliana (Mouse-ear cress).